A 416-amino-acid chain; its full sequence is 26S proteasome regulatory subunit 8 (416 aa).

The segment covering 1–18 has biased composition (low complexity); that stretch reads MAPPASTASSADPSKPTA. Residues 1-29 are disordered; sequence MAPPASTASSADPSKPTAQKLTEESDEKT. 200–207 provides a ligand contact to ATP; it reads GPPGTGKT.

This sequence belongs to the AAA ATPase family. In terms of assembly, component of the 19S proteasome regulatory particle complex. The 26S proteasome consists of a 20S core particle (CP) and two 19S regulatory subunits (RP). Interacts with elt-2.

Its subcellular location is the cytoplasm. It is found in the nucleus. In terms of biological role, component of the 26S proteasome, a multiprotein complex involved in the ATP-dependent degradation of ubiquitinated proteins. This complex plays a key role in the maintenance of protein homeostasis by removing misfolded or damaged proteins, which could impair cellular functions, and by removing proteins whose functions are no longer required. Therefore, the proteasome participates in numerous cellular processes, including cell cycle progression, apoptosis, or DNA damage repair. Belongs to the heterohexameric ring of AAA (ATPases associated with diverse cellular activities) proteins that unfolds ubiquitinated target proteins that are concurrently translocated into a proteolytic chamber and degraded into peptides. In addition, regulates gene expression in response to bacterial infection. Binds to the GATA transcription factor elt-2 to control its transcriptional activity and thus the expression of elt-2-dependent genes in response to infection by Gram-negative bacteria such as P.aeruginosa. This chain is 26S proteasome regulatory subunit 8, found in Caenorhabditis elegans.